The primary structure comprises 1441 residues: Protein clueless (1441 aa).

2 disordered regions span residues 1–79 and 106–131; these read MALD…EAAT and VAAN…ELES. A compositionally biased stretch (polar residues) spans 8-22; that stretch reads KNSSSAATGDANTVK. The span at 54-63 shows a compositional bias: basic residues; sequence AKKKGKKNRN. Composition is skewed to low complexity over residues 64–79 and 106–126; these read KSPP…EAAT and VAAN…AASS. Serine 273 carries the phosphoserine modification. The region spanning 427–669 is the Clu domain; the sequence is RAEDAFSSKL…RTFPPDVNFL (243 aa). The span at 726–753 shows a compositional bias: basic and acidic residues; sequence KKQDEAKEGTKEPASETEKESPPKAITE. Disordered stretches follow at residues 726–769 and 961–1009; these read KKQD…GETK and EIHK…SGGT. Residues 964-977 show a composition bias toward basic residues; it reads KKRTNTKYNKHKSS. Residues 978–1009 are compositionally biased toward low complexity; sequence KSSGSGSKQSGQTSNQNGTSTSPSSSTASGGT. TPR repeat units follow at residues 1109–1142, 1235–1268, and 1270–1303; these read AYNF…LNNV, ALID…NLKY, and GAKA…EKET.

Belongs to the CLU family.

It is found in the cytoplasm. Functionally, mRNA-binding protein involved in proper cytoplasmic distribution of mitochondria. The sequence is that of Protein clueless from Drosophila willistoni (Fruit fly).